The chain runs to 651 residues: Mediator of RNA polymerase II transcription subunit 17 (651 aa).

The disordered stretch occupies residues 51 to 83 (QGSGSEEEEAAGAEGDAQDWAGAGSSADQDDEE). Positions 62-74 (GAEGDAQDWAGAG) are enriched in low complexity.

This sequence belongs to the Mediator complex subunit 17 family. Component of the Mediator complex, which is composed of MED1, MED4, MED6, MED7, MED8, MED9, MED10, MED11, MED12, MED13, MED13L, MED14, MED15, MED16, MED17, MED18, MED19, MED20, MED21, MED22, MED23, MED24, MED25, MED26, MED27, MED29, MED30, MED31, CCNC, CDK8 and CDC2L6/CDK11. The MED12, MED13, CCNC and CDK8 subunits form a distinct module termed the CDK8 module. Mediator containing the CDK8 module is less active than Mediator lacking this module in supporting transcriptional activation. Individual preparations of the Mediator complex lacking one or more distinct subunits have been variously termed ARC, CRSP, DRIP, PC2, SMCC and TRAP. Interacts with GATA1, PPARG and STAT2.

It localises to the nucleus. Functionally, component of the Mediator complex, a coactivator involved in the regulated transcription of nearly all RNA polymerase II-dependent genes. Mediator functions as a bridge to convey information from gene-specific regulatory proteins to the basal RNA polymerase II transcription machinery. Mediator is recruited to promoters by direct interactions with regulatory proteins and serves as a scaffold for the assembly of a functional preinitiation complex with RNA polymerase II and the general transcription factors. The sequence is that of Mediator of RNA polymerase II transcription subunit 17 (MED17) from Bos taurus (Bovine).